The chain runs to 127 residues: Small ribosomal subunit protein uS11 (127 aa).

It belongs to the universal ribosomal protein uS11 family. Part of the 30S ribosomal subunit.

Its function is as follows. Located on the platform of the 30S subunit. This is Small ribosomal subunit protein uS11 from Halobacterium salinarum (strain ATCC 700922 / JCM 11081 / NRC-1) (Halobacterium halobium).